Consider the following 355-residue polypeptide: Probable dual-specificity RNA methyltransferase RlmN (355 aa).

The active-site Proton acceptor is the glutamate 89. In terms of domain architecture, Radical SAM core spans 95 to 322 (YENRKTVCLS…KRLGVPTSIR (228 aa)). Cysteine 102 and cysteine 333 are disulfide-bonded. [4Fe-4S] cluster is bound by residues cysteine 109, cysteine 113, and cysteine 116. S-adenosyl-L-methionine contacts are provided by residues 159–160 (GE), serine 191, 214–216 (SLH), and asparagine 290. Catalysis depends on cysteine 333, which acts as the S-methylcysteine intermediate.

It belongs to the radical SAM superfamily. RlmN family. It depends on [4Fe-4S] cluster as a cofactor.

The protein localises to the cytoplasm. The enzyme catalyses adenosine(2503) in 23S rRNA + 2 reduced [2Fe-2S]-[ferredoxin] + 2 S-adenosyl-L-methionine = 2-methyladenosine(2503) in 23S rRNA + 5'-deoxyadenosine + L-methionine + 2 oxidized [2Fe-2S]-[ferredoxin] + S-adenosyl-L-homocysteine. The catalysed reaction is adenosine(37) in tRNA + 2 reduced [2Fe-2S]-[ferredoxin] + 2 S-adenosyl-L-methionine = 2-methyladenosine(37) in tRNA + 5'-deoxyadenosine + L-methionine + 2 oxidized [2Fe-2S]-[ferredoxin] + S-adenosyl-L-homocysteine. Functionally, specifically methylates position 2 of adenine 2503 in 23S rRNA and position 2 of adenine 37 in tRNAs. In Thermus thermophilus (strain ATCC BAA-163 / DSM 7039 / HB27), this protein is Probable dual-specificity RNA methyltransferase RlmN.